Here is a 463-residue protein sequence, read N- to C-terminus: L-seryl-tRNA(Sec) selenium transferase (463 aa).

At Lys295 the chain carries N6-(pyridoxal phosphate)lysine.

Belongs to the SelA family. As to quaternary structure, homodecamer; pentamer of dimers. Binds only one seryl-tRNA(Sec) per dimer. Pyridoxal 5'-phosphate is required as a cofactor.

It is found in the cytoplasm. It carries out the reaction L-seryl-tRNA(Sec) + selenophosphate + H(+) = L-selenocysteinyl-tRNA(Sec) + phosphate. It participates in aminoacyl-tRNA biosynthesis; selenocysteinyl-tRNA(Sec) biosynthesis; selenocysteinyl-tRNA(Sec) from L-seryl-tRNA(Sec) (bacterial route): step 1/1. Functionally, converts seryl-tRNA(Sec) to selenocysteinyl-tRNA(Sec) required for selenoprotein biosynthesis. The protein is L-seryl-tRNA(Sec) selenium transferase of Escherichia coli O81 (strain ED1a).